The primary structure comprises 396 residues: MAIRIKLKPGREKSLERRHPWVFSNGIHNVKGKPEPGQTVDVVAHDGHWLGRGAWSGESQIQVRVWTFDREEEIDREFFKRRILRAQAGRDDLIREQGLTGYRLIAAESDGLPGITIDKYANVLVCQLLSMGADVWRDTIVDVLAELYPDCAIYERSDVDSRKKEGLASTMGLLHGTLPEMPLIIEENGIKIAVDVTKGHKTGFYLDQRDNRAIAARFVKGKSVLNCFCYTGTFGLYAAKAGAASIENVDVSSLALDTARLNMRVNGLSDDNVHYNEADVFKLLRQYRDEGKTFDVIVLDPPKFADNKSQLNGACRGYKDINMIALQLLNPGGVLLTFSCSGLMPADLFQKIVADAALDAKREIQFIERLSQASDHPIGSAFPEGFYLKGLVARVW.

The PUA domain occupies 2–79; that stretch reads AIRIKLKPGR…REEEIDREFF (78 aa).

The protein belongs to the methyltransferase superfamily. RlmI family.

The protein localises to the cytoplasm. The catalysed reaction is cytidine(1962) in 23S rRNA + S-adenosyl-L-methionine = 5-methylcytidine(1962) in 23S rRNA + S-adenosyl-L-homocysteine + H(+). Its function is as follows. Specifically methylates the cytosine at position 1962 (m5C1962) of 23S rRNA. This is Ribosomal RNA large subunit methyltransferase I from Shewanella oneidensis (strain ATCC 700550 / JCM 31522 / CIP 106686 / LMG 19005 / NCIMB 14063 / MR-1).